Reading from the N-terminus, the 320-residue chain is Aminoacyl tRNA synthase complex-interacting multifunctional protein 2 (320 aa).

The tract at residues 82 to 162 (TPDADLDVTN…HTHSSVKSVP (81 aa)) is interaction with PRKN. The interval 162-225 (PENLLKCFGE…FLFSLFGQKH (64 aa)) is interaction with TP53. In terms of domain architecture, GST C-terminal spans 220–317 (LFGQKHNAVN…NLAPFNTALK (98 aa)).

Part of the multisynthetase complex (MSC), a multisubunit complex that groups tRNA ligases for Arg (RARS1), Asp (DARS1), Gln (QARS1), Ile (IARS1), Leu (LARS1), Lys (KARS1), Met (MARS1) the bifunctional ligase for Glu and Pro (EPRS1) and the auxiliary subunits AIMP1/p43, AIMP2/p38 and EEF1E1/p18. Interacts (via N-terminus) with KARS1. Interacts with EPRS1. Forms a linear complex that contains MARS1, EEF1E1, EPRS1 and AIMP2 that is at the core of the multisubunit complex. Binds FUBP1 (via C-terminus). Interacts in both its unphosphorylated and phosphorylated forms with p53/TP53 (via N-terminus) in the nucleus following UV irradiation. Interacts (via N-terminus) with PRKN/parkin (via first RING-type domain). Interacts with TARS3. Phosphorylated on serine residues in response to UV irradiation. Post-translationally, ubiquitinated by PRKN, leading to its degradation by the proteasome. Mutant PRKN fails to ubiquitinate AIMP2 efficiently, allowing its accumulation which may contribute to neurodegeneration associated with Parkinson disease.

It is found in the cytoplasm. The protein resides in the cytosol. Its subcellular location is the nucleus. Its function is as follows. Required for assembly and stability of the aminoacyl-tRNA synthase complex. Mediates ubiquitination and degradation of FUBP1, a transcriptional activator of MYC, leading to MYC down-regulation which is required for aveolar type II cell differentiation. Blocks MDM2-mediated ubiquitination and degradation of p53/TP53. Functions as a proapoptotic factor. This chain is Aminoacyl tRNA synthase complex-interacting multifunctional protein 2 (AIMP2), found in Homo sapiens (Human).